The primary structure comprises 352 residues: 4-hydroxy-2-oxovalerate aldolase 4 (352 aa).

The region spanning 9–261 (IRVTDSSLRD…RTGIDTLKII (253 aa)) is the Pyruvate carboxyltransferase domain. Residue 17 to 18 (RD) participates in substrate binding. Aspartate 18 provides a ligand contact to Mn(2+). Histidine 21 serves as the catalytic Proton acceptor. 2 residues coordinate substrate: serine 171 and histidine 200. 2 residues coordinate Mn(2+): histidine 200 and histidine 202. Position 291 (tyrosine 291) interacts with substrate.

It belongs to the 4-hydroxy-2-oxovalerate aldolase family.

The catalysed reaction is (S)-4-hydroxy-2-oxopentanoate = acetaldehyde + pyruvate. This chain is 4-hydroxy-2-oxovalerate aldolase 4, found in Rhodococcus jostii (strain RHA1).